A 196-amino-acid chain; its full sequence is Homeobox protein ANF-1 (196 aa).

The homeobox DNA-binding region spans G119 to H178.

Belongs to the ANF homeobox family.

Its subcellular location is the nucleus. May be involved in the early patterning of the most anterior region of the main embryonic body axis. This Gallus gallus (Chicken) protein is Homeobox protein ANF-1.